A 408-amino-acid chain; its full sequence is MDLLGILSPNAYFCSMAKLINLKIFTHFFRSSAAGGILLLICVLVSLIVANTGLGVHFNDFLGYPLGFEAAGLQLRYPILLWINDGLMAVFFLLVGLEIKREVIEGELSSLRHAALPVLAAVGGVIIPALIYFLFNGQSPDTAKGWGIPMATDIAFALGILSLLGDKVPSGLKIFLAALAIVDDLIAILVIAVFYSSELHFLYLGYAGGIFVLLMVFNRLGVKNLFFYLLPGAVMWYFIHHSGIHATIAGVLTALTLPTNQEDKDSPLEKLEHALARPVNFIIMPVFALANTNIAFESEMLQGLTGNLGLGIILGLVLGKPIGIFVMSWLSVKIRAADLPAQTTWTHVLGLGLLGGIGFTMSIFIALLSFQEQAYQNEAKFAILTASVLAGAAGFILLSSYNKNKQEQ.

11 helical membrane passes run 36–56, 79–99, 115–135, 145–165, 174–194, 197–217, 225–245, 281–301, 310–330, 348–368, and 381–401; these read GILL…GLGV, ILLW…GLEI, ALPV…YFLF, GWGI…SLLG, IFLA…IAVF, SELH…LMVF, LFFY…SGIH, FIIM…SEML, LGII…MSWL, VLGL…IALL, and FAIL…LSSY.

This sequence belongs to the NhaA Na(+)/H(+) (TC 2.A.33) antiporter family.

It localises to the cell inner membrane. The enzyme catalyses Na(+)(in) + 2 H(+)(out) = Na(+)(out) + 2 H(+)(in). Functionally, na(+)/H(+) antiporter that extrudes sodium in exchange for external protons. This is Na(+)/H(+) antiporter NhaA 2 from Flavobacterium johnsoniae (strain ATCC 17061 / DSM 2064 / JCM 8514 / BCRC 14874 / CCUG 350202 / NBRC 14942 / NCIMB 11054 / UW101) (Cytophaga johnsonae).